A 249-amino-acid chain; its full sequence is Cytokine-inducible SH2-containing protein (249 aa).

The tract at residues 41–64 (AFPEEPAPTFAAPEPDGSAPQTRD) is disordered. Residues 84–165 (WYWGSITASE…PDVVSLIQHY (82 aa)) enclose the SH2 domain. The 49-residue stretch at 200–248 (KLLRPLGRRDSIPSLQHLCRLRINRCTTEVERLPLPRRMGDYLKQYPFQ) folds into the SOCS box domain.

It participates in protein modification; protein ubiquitination. Its function is as follows. SOCS family proteins form part of a classical negative feedback system that regulates cytokine signal transduction. CIS is involved in the negative regulation of cytokines that signal through the JAK-STAT5 pathway such as erythropoietin, prolactin and interleukin 3 (IL3) receptor. Inhibits STAT5 trans-activation by suppressing its tyrosine phosphorylation. May be a substrate-recognition component of a SCF-like ECS (Elongin BC-CUL2/5-SOCS-box protein) E3 ubiquitin-protein ligase complex which mediates the ubiquitination and subsequent proteasomal degradation of target proteins. This chain is Cytokine-inducible SH2-containing protein (CISH), found in Gallus gallus (Chicken).